We begin with the raw amino-acid sequence, 166 residues long: Phosphopantetheine adenylyltransferase (166 aa).

A substrate-binding site is contributed by serine 8. ATP is bound by residues 8 to 9 (SF) and histidine 16. Substrate contacts are provided by lysine 40, threonine 72, and arginine 86. ATP contacts are provided by residues 87–89 (GLR), glutamate 97, and 122–128 (YSFLSSS).

Belongs to the bacterial CoaD family. Homohexamer. Mg(2+) serves as cofactor.

It localises to the cytoplasm. It carries out the reaction (R)-4'-phosphopantetheine + ATP + H(+) = 3'-dephospho-CoA + diphosphate. It functions in the pathway cofactor biosynthesis; coenzyme A biosynthesis; CoA from (R)-pantothenate: step 4/5. Reversibly transfers an adenylyl group from ATP to 4'-phosphopantetheine, yielding dephospho-CoA (dPCoA) and pyrophosphate. The protein is Phosphopantetheine adenylyltransferase of Synechococcus elongatus (strain ATCC 33912 / PCC 7942 / FACHB-805) (Anacystis nidulans R2).